The chain runs to 362 residues: MLFWLTENVLALYSSRFNIVCHLTFRAIISFLSALFISLGIGHCVITWFHNLCFFQIVRCDGPKSHTQKQSTPTMGGIVLILSIVISVMVCADLSNIYVWYVFFILITYGILGLTDDILKIKKKSSKGLSVLHKYFWQSLIALTLVIIIFMSDRSLTSTQLIVPFFKNFMPQLGIWYIFLAYFVVVGTSNAVNLSDGLDGLAIMPIMFVAAGLAVVAWISNDIHFASHLNIPYICFSGELIIICSAIIGAGLGFLWFNTYPAQIFMGDVGSLSLGGTLGIIAVLLHQECLLLIMGGMFVIETLSVILQVIYFRLFGQRIFKMAPIHHHFELKGCPEPRIIVRFWIISLMLVFVGLITLKIRQ.

Helical transmembrane passes span 28-48, 72-92, 94-114, 131-151, 169-189, 200-220, 236-256, 264-284, 290-310, and 339-359; these read IISF…VITW, TPTM…MVCA, LSNI…ILGL, VLHK…IIFM, FMPQ…VGTS, GLAI…AWIS, FSGE…GFLW, IFMG…IAVL, LLLI…LQVI, and IIVR…ITLK.

It belongs to the glycosyltransferase 4 family. MraY subfamily. The cofactor is Mg(2+).

The protein resides in the cell inner membrane. The enzyme catalyses UDP-N-acetyl-alpha-D-muramoyl-L-alanyl-gamma-D-glutamyl-meso-2,6-diaminopimeloyl-D-alanyl-D-alanine + di-trans,octa-cis-undecaprenyl phosphate = di-trans,octa-cis-undecaprenyl diphospho-N-acetyl-alpha-D-muramoyl-L-alanyl-D-glutamyl-meso-2,6-diaminopimeloyl-D-alanyl-D-alanine + UMP. It participates in cell wall biogenesis; peptidoglycan biosynthesis. Functionally, catalyzes the initial step of the lipid cycle reactions in the biosynthesis of the cell wall peptidoglycan: transfers peptidoglycan precursor phospho-MurNAc-pentapeptide from UDP-MurNAc-pentapeptide onto the lipid carrier undecaprenyl phosphate, yielding undecaprenyl-pyrophosphoryl-MurNAc-pentapeptide, known as lipid I. In Blochmanniella pennsylvanica (strain BPEN), this protein is Phospho-N-acetylmuramoyl-pentapeptide-transferase.